Consider the following 771-residue polypeptide: Tubulin monoglycylase TTLL3 (771 aa).

Residues 70-106 are disordered; that stretch reads PRPSFSQPRRHDHETETTDEGDSSDEDDLGEEVERDD. Positions 86 to 106 are enriched in acidic residues; that stretch reads TTDEGDSSDEDDLGEEVERDD. A TTL domain is found at 220–566; it reads EGEKMGEVHN…RRSERNTDTG (347 aa). ATP-binding positions include lysine 339, 345–346, 377–380, 390–392, and 434–435; these read RG, QKYI, KFD, and CN. Arginine 345 lines the a protein pocket. Residue serine 437 coordinates L-glutamate. Residues aspartate 512, glutamate 525, and asparagine 527 each coordinate Mg(2+). Residue glutamate 525 coordinates ATP. Disordered regions lie at residues 605–640 and 682–713; these read LIQS…EEVK and TELH…PTLY. The span at 614–633 shows a compositional bias: polar residues; that stretch reads SKSTNHKSSLLSSPCTSGKE.

Mg(2+) serves as cofactor.

The protein resides in the cytoplasm. The protein localises to the cytoskeleton. Its subcellular location is the cell projection. It localises to the cilium. It is found in the cilium axoneme. The protein resides in the flagellum axoneme. The catalysed reaction is L-glutamyl-[protein] + glycine + ATP = glycyl-L-glutamyl-[protein] + ADP + phosphate + H(+). In terms of biological role, monoglycylase which modifies alpha- and beta-tubulin, adding a single glycine on the gamma-carboxyl groups of specific glutamate residues to generate monoglycine side chains within the C-terminal tail of tubulin. Not involved in elongation step of the polyglycylation reaction. Preferentially glycylates a beta-tail peptide over the alpha-tail, although shifts its preference toward alpha-tail as beta-tail glutamylation increases. Competes with polyglutamylases for modification site on beta-tubulin substrate, thereby creating an anticorrelation between glycylation and glutamylation reactions. Not involved in elongation step of the polyglycylation reaction. The chain is Tubulin monoglycylase TTLL3 (ttll3) from Danio rerio (Zebrafish).